We begin with the raw amino-acid sequence, 507 residues long: Maturase K (507 aa).

The protein belongs to the intron maturase 2 family. MatK subfamily.

It localises to the plastid. It is found in the chloroplast. Its function is as follows. Usually encoded in the trnK tRNA gene intron. Probably assists in splicing its own and other chloroplast group II introns. This Lens ervoides (Beaded lentil) protein is Maturase K.